Reading from the N-terminus, the 152-residue chain is Large ribosomal subunit protein uL15 (152 aa).

Over residues 1 to 13 (MLTLGNLSPQEGS) the composition is skewed to polar residues. The tract at residues 1–62 (MLTLGNLSPQ…GGQMPLQRRL (62 aa)) is disordered. Basic residues predominate over residues 31 to 40 (TAGRGHKGFK).

The protein belongs to the universal ribosomal protein uL15 family. In terms of assembly, part of the 50S ribosomal subunit.

Its function is as follows. Binds to the 23S rRNA. This chain is Large ribosomal subunit protein uL15, found in Desulfotalea psychrophila (strain LSv54 / DSM 12343).